The primary structure comprises 404 residues: MKLPIYLDYSATTPVDPRVAQKMADCLLVDGNFGNPASRSHVFGWKAEEAVENGRRQVAELINADPREIVWTSGATESDNLALKGVAHFYQTKGKHIITSKIEHKAVLDTARQLEREGFEVTYLEPGEDGIVTPAMVEAVLRDDTILVSLMHVNNEVGSINDIAAIGELTRSRGVLFHVDAAQSAGKVEIDLQKLKVDLMSFSAHKVYGPKGIGALYVSRKPRVRLEAIIHGGGHERGMRSGTLPTHQIVGMGEAFAIAKQEMVAENARIKALSDRFFKQVSDLEELYVNGSQTARVPHNLNLSFNYVEGESLLMSLKDIAVSSGSACTSASLEPSYVLRALGRNDELAHSSIRFSFGRFTTEEEVDYAAQKVCEAVNKLRELSPLWDMYKDGVDISKIEWAAH.

Residues 75–76 (AT), N155, Q183, and 203–205 (SAH) each bind pyridoxal 5'-phosphate. K206 bears the N6-(pyridoxal phosphate)lysine mark. Position 243 (T243) interacts with pyridoxal 5'-phosphate. The active-site Cysteine persulfide intermediate is C328. [2Fe-2S] cluster is bound at residue C328.

Belongs to the class-V pyridoxal-phosphate-dependent aminotransferase family. NifS/IscS subfamily. As to quaternary structure, homodimer. Forms a heterotetramer with IscU, interacts with other sulfur acceptors. Pyridoxal 5'-phosphate is required as a cofactor.

It localises to the cytoplasm. It carries out the reaction (sulfur carrier)-H + L-cysteine = (sulfur carrier)-SH + L-alanine. The protein operates within cofactor biosynthesis; iron-sulfur cluster biosynthesis. Master enzyme that delivers sulfur to a number of partners involved in Fe-S cluster assembly, tRNA modification or cofactor biosynthesis. Catalyzes the removal of elemental sulfur atoms from cysteine to produce alanine. Functions as a sulfur delivery protein for Fe-S cluster synthesis onto IscU, an Fe-S scaffold assembly protein, as well as other S acceptor proteins. This chain is Cysteine desulfurase IscS, found in Pseudomonas putida (strain GB-1).